A 1649-amino-acid polypeptide reads, in one-letter code: Formin-like protein 20 (1649 aa).

The 194-residue stretch at 1-194 (MALFRRFFYK…QYISRRNLGS (194 aa)) folds into the Phosphatase tensin-type domain. Residue C127 is the Phosphocysteine intermediate of the active site. A C2 tensin-type domain is found at 200–339 (DTPLLLDCLI…FKAEVLFSGA (140 aa)). Disordered regions lie at residues 416 to 774 (DCAS…PWKS) and 787 to 1245 (STSQ…QKKS). The span at 421–483 (DSNHKHDMHA…RRTVEAKEND (63 aa)) shows a compositional bias: basic and acidic residues. Polar residues-rich tracts occupy residues 500 to 513 (LESM…SLNK) and 585 to 597 (RINS…TTSL). The span at 598-616 (KDGKRATSPDGVIPKDAKT) shows a compositional bias: basic and acidic residues. Residues 648–662 (SLPPASPHQAPPPLP) show a composition bias toward pro residues. A compositionally biased stretch (polar residues) spans 665 to 678 (TSEAKTVLHSSQAV). Pro residues-rich tracts occupy residues 680 to 691 (SPPPPPPPPPLP), 701 to 711 (LPPPPPPPPPF), 722 to 732 (LPPPPPPPPPF), 743 to 752 (LPPPPPPPLP), and 795 to 804 (SPTPPPPPPA). Polar residues predominate over residues 809 to 820 (GQKSSDLQTSQL). 3 stretches are compositionally biased toward pro residues: residues 821 to 832 (PSPPPPPPPPPF), 843 to 854 (LPPPPPPPPPPF), and 865 to 874 (LPPPPPPPPW). The segment covering 878–890 (YASTFETHEACST) has biased composition (polar residues). Pro residues-rich tracts occupy residues 893 to 904 (SPPPPPPPPPFS), 944 to 960 (PSPP…PPPF), and 968 to 1213 (SPPP…PPPM). One can recognise an FH2 domain in the interval 1237 to 1635 (FGSAAQKKSS…KALKEAEMEK (399 aa)).

Belongs to the formin-like family. Class-II subfamily.

This is Formin-like protein 20 (FH20) from Arabidopsis thaliana (Mouse-ear cress).